A 435-amino-acid chain; its full sequence is Glutamate-1-semialdehyde 2,1-aminomutase (435 aa).

An N6-(pyridoxal phosphate)lysine modification is found at Lys-270.

The protein belongs to the class-III pyridoxal-phosphate-dependent aminotransferase family. HemL subfamily. In terms of assembly, homodimer. Pyridoxal 5'-phosphate is required as a cofactor.

Its subcellular location is the cytoplasm. The enzyme catalyses (S)-4-amino-5-oxopentanoate = 5-aminolevulinate. The protein operates within porphyrin-containing compound metabolism; protoporphyrin-IX biosynthesis; 5-aminolevulinate from L-glutamyl-tRNA(Glu): step 2/2. The chain is Glutamate-1-semialdehyde 2,1-aminomutase from Wigglesworthia glossinidia brevipalpis.